Consider the following 497-residue polypeptide: Serine/threonine-protein phosphatase 2A 56 kDa regulatory subunit beta isoform (497 aa).

Over residues 1–19 (METKLPPASTPTSPSSPGL) the composition is skewed to low complexity. Disordered stretches follow at residues 1–55 (METK…YQSN) and 473–497 (QGTQGAKEAPVPRPTPQVAASGGQS). Phosphoserine occurs at positions 32, 35, 44, 46, 47, and 48. Over residues 34-45 (RSLRRARPRRSH) the composition is skewed to basic residues.

This sequence belongs to the phosphatase 2A regulatory subunit B56 family. As to quaternary structure, component of the serine/threonine-protein phosphatase 2A complex (PP2A). This complex consists of a common heterodimeric core enzyme, composed of a 36 kDa catalytic subunit (subunit C) and a 65 kDa constant scaffold subunit (PR65 or subunit A), that associates with a variety of regulatory subunits. Proteins that associate with the core dimer include three families of regulatory subunits B (the R2/B/PR55/B55, R3/B''/PR72/PR130/PR59 and R5/B'/B56 families), the 48 kDa variable regulatory subunit, viral proteins, and cell signaling molecules. Interacts with SGO1. Interacts with AKT1. Ubiquitinated by CUL3-KLHL15 complex; this modification leads to proteasomal degradation.

It is found in the cytoplasm. In terms of biological role, as the regulatory component of the serine/threonine-protein phosphatase 2A (PP2A) holoenzyme, modulates substrate specificity, subcellular localization, and responsiveness to phosphorylation. The phosphorylated form mediates the interaction between PP2A and AKT1, leading to AKT1 dephosphorylation. The protein is Serine/threonine-protein phosphatase 2A 56 kDa regulatory subunit beta isoform (Ppp2r5b) of Mus musculus (Mouse).